The primary structure comprises 144 residues: Granulocyte-macrophage colony-stimulating factor (144 aa).

Residues 1 to 17 (MWLQNLLFLGIVVYSFS) form the signal peptide. Ser-22 carries an O-linked (GalNAc...) serine glycan. O-linked (GalNAc...) threonine glycosylation occurs at Thr-27. Disulfide bonds link Cys-71–Cys-113 and Cys-105–Cys-138. A glycan (N-linked (GlcNAc...) asparagine) is linked at Asn-86.

It belongs to the GM-CSF family. Monomer. The signaling GM-CSF receptor complex is a dodecamer of two head-to-head hexamers of two alpha, two beta, and two ligand subunits.

It localises to the secreted. In terms of biological role, cytokine that stimulates the growth and differentiation of hematopoietic precursor cells from various lineages, including granulocytes, macrophages, eosinophils and erythrocytes. This Rattus norvegicus (Rat) protein is Granulocyte-macrophage colony-stimulating factor (Csf2).